A 429-amino-acid polypeptide reads, in one-letter code: 3-phosphoshikimate 1-carboxyvinyltransferase (429 aa).

Lys-23, Ser-24, and Arg-28 together coordinate 3-phosphoshikimate. Lys-23 contacts phosphoenolpyruvate. Phosphoenolpyruvate is bound by residues Gly-95 and Arg-123. 4 residues coordinate 3-phosphoshikimate: Ser-168, Gln-170, Asp-316, and Lys-343. Position 170 (Gln-170) interacts with phosphoenolpyruvate. The active-site Proton acceptor is Asp-316. 2 residues coordinate phosphoenolpyruvate: Arg-347 and Arg-389.

The protein belongs to the EPSP synthase family. As to quaternary structure, monomer.

Its subcellular location is the cytoplasm. The catalysed reaction is 3-phosphoshikimate + phosphoenolpyruvate = 5-O-(1-carboxyvinyl)-3-phosphoshikimate + phosphate. It functions in the pathway metabolic intermediate biosynthesis; chorismate biosynthesis; chorismate from D-erythrose 4-phosphate and phosphoenolpyruvate: step 6/7. Its function is as follows. Catalyzes the transfer of the enolpyruvyl moiety of phosphoenolpyruvate (PEP) to the 5-hydroxyl of shikimate-3-phosphate (S3P) to produce enolpyruvyl shikimate-3-phosphate and inorganic phosphate. In Bacillus cereus (strain ZK / E33L), this protein is 3-phosphoshikimate 1-carboxyvinyltransferase.